The following is a 361-amino-acid chain: Peptide chain release factor 1 (361 aa).

Glutamine 236 is subject to N5-methylglutamine. Over residues 285–309 (NAKDSARAADRKAQVGSGDRSERIR) the composition is skewed to basic and acidic residues. The tract at residues 285–312 (NAKDSARAADRKAQVGSGDRSERIRTYN) is disordered.

Belongs to the prokaryotic/mitochondrial release factor family. In terms of processing, methylated by PrmC. Methylation increases the termination efficiency of RF1.

Its subcellular location is the cytoplasm. Functionally, peptide chain release factor 1 directs the termination of translation in response to the peptide chain termination codons UAG and UAA. The protein is Peptide chain release factor 1 of Methylobacterium radiotolerans (strain ATCC 27329 / DSM 1819 / JCM 2831 / NBRC 15690 / NCIMB 10815 / 0-1).